The following is a 547-amino-acid chain: Chaperonin GroEL 3 (547 aa).

Residues 30 to 33 (TLGP), Lys51, 87 to 91 (DGTTT), Gly415, and Asp496 each bind ATP.

The protein belongs to the chaperonin (HSP60) family. As to quaternary structure, forms a cylinder of 14 subunits composed of two heptameric rings stacked back-to-back. Interacts with the co-chaperonin GroES.

It localises to the cytoplasm. It carries out the reaction ATP + H2O + a folded polypeptide = ADP + phosphate + an unfolded polypeptide.. Its function is as follows. Together with its co-chaperonin GroES, plays an essential role in assisting protein folding. The GroEL-GroES system forms a nano-cage that allows encapsulation of the non-native substrate proteins and provides a physical environment optimized to promote and accelerate protein folding. This chain is Chaperonin GroEL 3, found in Bradyrhizobium sp. (strain ORS 278).